We begin with the raw amino-acid sequence, 160 residues long: uncharacterized protein (160 aa).

Residues 1-23 (MSIPHSVFSALLVFVALATTTLA) form the signal peptide. Topologically, residues 24–132 (STEACLPTNK…DPNTAYWSSD (109 aa)) are cytoplasmic. The chain crosses the membrane as a helical span at residues 133–155 (LFGFYTTPTNVTVEMTGYLIWSM). The Extracellular portion of the chain corresponds to 156–160 (GNRRR).

To yeast protein FLO1.

It localises to the cell membrane. This is an uncharacterized protein from Saccharomyces cerevisiae (strain ATCC 204508 / S288c) (Baker's yeast).